The sequence spans 398 residues: cAMP-dependent protein kinase, catalytic subunit-like (398 aa).

In terms of domain architecture, Protein kinase spans 90–344 (LERIITIGKG…TQDVKDHKWF (255 aa)). ATP contacts are provided by residues 96 to 104 (IGKGTFGRV) and Lys119. The Proton acceptor role is filled by Asp213. One can recognise an AGC-kinase C-terminal domain in the interval 345–398 (EKVNWDDTLHLRVEPPIVPTLYHPGDTGNFDDYEEDTTGGPLCSQRDRDLFAEW).

The protein belongs to the protein kinase superfamily. Ser/Thr protein kinase family. cAMP subfamily.

It catalyses the reaction L-seryl-[protein] + ATP = O-phospho-L-seryl-[protein] + ADP + H(+). The enzyme catalyses L-threonyl-[protein] + ATP = O-phospho-L-threonyl-[protein] + ADP + H(+). The protein is cAMP-dependent protein kinase, catalytic subunit-like of Caenorhabditis elegans.